The sequence spans 1109 residues: Protein phosphatase 1 regulatory subunit 3A (1109 aa).

Residues S40 and S44 each carry the phosphoserine; by GSK3 modification. The residue at position 48 (S48) is a Phosphoserine; by PKA and ISPK. The residue at position 51 (S51) is a Phosphoserine. T58 carries the post-translational modification Phosphothreonine. The PP1-binding motif signature appears at 64-67; that stretch reads RRVS. At S67 the chain carries Phosphoserine; by PKA. A CBM21 domain is found at 124-232; it reads QLQVQKAMLE…NNNGTNYTLV (109 aa). Over residues 236–251 the composition is skewed to basic and acidic residues; that stretch reads KEPEPEPGKPLEEAPS. 4 disordered regions span residues 236–278, 340–424, 436–455, and 493–517; these read KEPE…NFEN, GKNT…SDGS, DDNANPAHGSGRGEISCSFP, and YFKKSTENRPSEEDYGTSKDNKEKR. Composition is skewed to polar residues over residues 340-352, 360-384, and 396-406; these read GKNTLSSDPSNIP, KNQSHSEACTDLSQRLLSPGSSAES, and YSSGNESSHQP. Residue S843 is modified to Phosphoserine. Disordered regions lie at residues 945 to 985 and 1011 to 1048; these read SATE…RKEK and SRENVERERHENEGLINSGDKEFESSASSSLPVQETQD. Polar residues predominate over residues 951 to 963; the sequence is YNCSPTRETQGQP. Basic and acidic residues-rich tracts occupy residues 966-985 and 1011-1034; these read KPEEVSRGSRRVTSETRKEK and SRENVERERHENEGLINSGDKEFE. A compositionally biased stretch (polar residues) spans 1035–1048; the sequence is SSASSSLPVQETQD. Residues 1066-1086 form a helical membrane-spanning segment; the sequence is FLLFLMFLVTVYHYDLMIGLA.

In terms of assembly, interacts with PPP1CC catalytic subunit of PP1, and associates with glycogen. Phosphorylation at Ser-48 by ISPK stimulates the dephosphorylation of glycogen synthase and phosphorylase kinase. In terms of tissue distribution, skeletal muscle, diaphragm and cardiac muscle.

It is found in the membrane. Its function is as follows. Seems to act as a glycogen-targeting subunit for PP1. PP1 is essential for cell division, and participates in the regulation of glycogen metabolism, muscle contractility and protein synthesis. Plays an important role in glycogen synthesis but is not essential for insulin activation of glycogen synthase. The protein is Protein phosphatase 1 regulatory subunit 3A (PPP1R3A) of Oryctolagus cuniculus (Rabbit).